The following is a 329-amino-acid chain: Tryptophan--tRNA ligase (329 aa).

ATP contacts are provided by residues 9 to 11 (QPS) and 17 to 18 (GN). The 'HIGH' region signature appears at 10-18 (PSGIPTIGN). Position 133 (aspartate 133) interacts with L-tryptophan. Residues 145-147 (GDD), valine 184, and 193-197 (KMSKS) each bind ATP. Residues 193 to 197 (KMSKS) carry the 'KMSKS' region motif.

The protein belongs to the class-I aminoacyl-tRNA synthetase family. In terms of assembly, homodimer.

Its subcellular location is the cytoplasm. The catalysed reaction is tRNA(Trp) + L-tryptophan + ATP = L-tryptophyl-tRNA(Trp) + AMP + diphosphate + H(+). Catalyzes the attachment of tryptophan to tRNA(Trp). The protein is Tryptophan--tRNA ligase of Staphylococcus aureus (strain MSSA476).